The chain runs to 610 residues: Elongation factor 4 (610 aa).

Residues 11–193 form the tr-type G domain; the sequence is KYIRNFSIVA…QIVTKIPAPA (183 aa). GTP-binding positions include 23 to 28 and 140 to 143; these read DHGKST and NKID.

This sequence belongs to the TRAFAC class translation factor GTPase superfamily. Classic translation factor GTPase family. LepA subfamily.

The protein localises to the cell membrane. It carries out the reaction GTP + H2O = GDP + phosphate + H(+). Its function is as follows. Required for accurate and efficient protein synthesis under certain stress conditions. May act as a fidelity factor of the translation reaction, by catalyzing a one-codon backward translocation of tRNAs on improperly translocated ribosomes. Back-translocation proceeds from a post-translocation (POST) complex to a pre-translocation (PRE) complex, thus giving elongation factor G a second chance to translocate the tRNAs correctly. Binds to ribosomes in a GTP-dependent manner. The sequence is that of Elongation factor 4 from Levilactobacillus brevis (strain ATCC 367 / BCRC 12310 / CIP 105137 / JCM 1170 / LMG 11437 / NCIMB 947 / NCTC 947) (Lactobacillus brevis).